Here is an 88-residue protein sequence, read N- to C-terminus: Small ribosomal subunit protein bS20 (88 aa).

Residues 1–23 (MANSPQAKKRARQNDKARAHNAS) form a disordered region.

This sequence belongs to the bacterial ribosomal protein bS20 family.

Its function is as follows. Binds directly to 16S ribosomal RNA. In Teredinibacter turnerae (strain ATCC 39867 / T7901), this protein is Small ribosomal subunit protein bS20.